Consider the following 132-residue polypeptide: Small ribosomal subunit protein uS8 (132 aa).

The protein belongs to the universal ribosomal protein uS8 family. As to quaternary structure, part of the 30S ribosomal subunit. Contacts proteins S5 and S12.

In terms of biological role, one of the primary rRNA binding proteins, it binds directly to 16S rRNA central domain where it helps coordinate assembly of the platform of the 30S subunit. The chain is Small ribosomal subunit protein uS8 from Leuconostoc citreum (strain KM20).